The sequence spans 488 residues: MLENKKMEFWFVVGSQHLYGEEALKEVRKNSETIVDELNKSANLPYKIIFKDLATSADKIKEIMKEVNYRDEVAGVITWMHTFSPAKMWIAGTKILQKPLLHFATQYNENIPWKTIDMDYMNLHQSAHGDREYGFINARLKKHNKVVVGYWKDKEVQKQVSDWMKVAAGYIASESIKVARFGDNMRNVAVTEGDKVEAQIQFGWTVDYFGIGDLVAEMDKVSQDEINKTYEEFKDLYILDPGENDPAFYEKQVKEQIKIEIGLRRFLEKGNYNAFTTNFEDLYGMKQLPGLAVQRLNAEGYGFAGEGDWKTAALDRLLKVMTNNTATGFMEDYTYELSRGNEKALGAHMLEVDPTFASDKPKVIVKPLGIGDKEDPARLIFNGSTGKGVAVSMLDLGTHYRLIINGLTAVKPDEDMPNLPVAKMVWKPEPNFIEGVKSWIYAGGGHHTVVSLELTVEQVYDWSRMVGLEAVIIDKDTKLRDIIEKTTK.

4 residues coordinate Mn(2+): glutamate 306, glutamate 331, histidine 348, and histidine 447.

This sequence belongs to the arabinose isomerase family. Mn(2+) is required as a cofactor.

It catalyses the reaction beta-L-arabinopyranose = L-ribulose. Its pathway is carbohydrate degradation; L-arabinose degradation via L-ribulose; D-xylulose 5-phosphate from L-arabinose (bacterial route): step 1/3. In terms of biological role, catalyzes the conversion of L-arabinose to L-ribulose. The polypeptide is L-arabinose isomerase 2 (Clostridium acetobutylicum (strain ATCC 824 / DSM 792 / JCM 1419 / IAM 19013 / LMG 5710 / NBRC 13948 / NRRL B-527 / VKM B-1787 / 2291 / W)).